Reading from the N-terminus, the 490-residue chain is Aspartyl/glutamyl-tRNA(Asn/Gln) amidotransferase subunit B (490 aa).

This sequence belongs to the GatB/GatE family. GatB subfamily. In terms of assembly, heterotrimer of A, B and C subunits.

The catalysed reaction is L-glutamyl-tRNA(Gln) + L-glutamine + ATP + H2O = L-glutaminyl-tRNA(Gln) + L-glutamate + ADP + phosphate + H(+). The enzyme catalyses L-aspartyl-tRNA(Asn) + L-glutamine + ATP + H2O = L-asparaginyl-tRNA(Asn) + L-glutamate + ADP + phosphate + 2 H(+). Functionally, allows the formation of correctly charged Asn-tRNA(Asn) or Gln-tRNA(Gln) through the transamidation of misacylated Asp-tRNA(Asn) or Glu-tRNA(Gln) in organisms which lack either or both of asparaginyl-tRNA or glutaminyl-tRNA synthetases. The reaction takes place in the presence of glutamine and ATP through an activated phospho-Asp-tRNA(Asn) or phospho-Glu-tRNA(Gln). This is Aspartyl/glutamyl-tRNA(Asn/Gln) amidotransferase subunit B from Prochlorococcus marinus (strain MIT 9312).